The chain runs to 1411 residues: DNA-directed RNA polymerase subunit beta' (1411 aa).

The Zn(2+) site is built by Cys70, Cys72, Cys85, and Cys88. Mg(2+)-binding residues include Asp460, Asp462, and Asp464. Cys814, Cys888, Cys895, and Cys898 together coordinate Zn(2+).

It belongs to the RNA polymerase beta' chain family. As to quaternary structure, the RNAP catalytic core consists of 2 alpha, 1 beta, 1 beta' and 1 omega subunit. When a sigma factor is associated with the core the holoenzyme is formed, which can initiate transcription. Mg(2+) serves as cofactor. Zn(2+) is required as a cofactor.

The enzyme catalyses RNA(n) + a ribonucleoside 5'-triphosphate = RNA(n+1) + diphosphate. In terms of biological role, DNA-dependent RNA polymerase catalyzes the transcription of DNA into RNA using the four ribonucleoside triphosphates as substrates. This Idiomarina loihiensis (strain ATCC BAA-735 / DSM 15497 / L2-TR) protein is DNA-directed RNA polymerase subunit beta'.